Reading from the N-terminus, the 137-residue chain is Small ribosomal subunit protein uS12 (137 aa).

The disordered stretch occupies residues 1–55 (MPTINQLVRKPRQSKIKKSDSPALNKGFNSKKKKFTDLNSPQKRGVCTRVGTMTP). The residue at position 102 (D102) is a 3-methylthioaspartic acid. The interval 118 to 137 (SGVDGRRQGRSLYGTKKPKN) is disordered.

The protein belongs to the universal ribosomal protein uS12 family. Part of the 30S ribosomal subunit. Contacts proteins S8 and S17. May interact with IF1 in the 30S initiation complex.

With S4 and S5 plays an important role in translational accuracy. In terms of biological role, interacts with and stabilizes bases of the 16S rRNA that are involved in tRNA selection in the A site and with the mRNA backbone. Located at the interface of the 30S and 50S subunits, it traverses the body of the 30S subunit contacting proteins on the other side and probably holding the rRNA structure together. The combined cluster of proteins S8, S12 and S17 appears to hold together the shoulder and platform of the 30S subunit. The sequence is that of Small ribosomal subunit protein uS12 from Staphylococcus aureus (strain Mu3 / ATCC 700698).